The primary structure comprises 392 residues: Glycerophosphodiester phosphodiesterase GDPD5 (392 aa).

An N-terminal signal peptide occupies residues 1–21 (MILTRCLPLIWLSLLTVCAAG). The GP-PDE domain maps to 44 to 362 (PYNIAHRGSN…DFTGSLHNFQ (319 aa)). Asn-120, Asn-239, Asn-260, and Asn-329 each carry an N-linked (GlcNAc...) asparagine glycan.

It belongs to the glycerophosphoryl diester phosphodiesterase family. As to expression, expressed in roots, rosette and cauline leaves, stems, flowers and siliques.

Its subcellular location is the secreted. It is found in the cell wall. The protein resides in the vacuole. The enzyme catalyses a sn-glycero-3-phosphodiester + H2O = an alcohol + sn-glycerol 3-phosphate + H(+). This Arabidopsis thaliana (Mouse-ear cress) protein is Glycerophosphodiester phosphodiesterase GDPD5.